Reading from the N-terminus, the 314-residue chain is Beta-lactamase 2 (314 aa).

The signal sequence occupies residues 1-26 (MLHTRIRRATLGAVAALSLVPVMACG). A compositionally biased stretch (low complexity) spans 32-47 (DAAEPAGSAPSSSAAA). A disordered region spans residues 32-51 (DAAEPAGSAPSSSAAAHKPG). Catalysis depends on S96, which acts as the Acyl-ester intermediate. Position 258–260 (258–260 (KTG)) interacts with substrate.

This sequence belongs to the class-A beta-lactamase family.

It catalyses the reaction a beta-lactam + H2O = a substituted beta-amino acid. The protein is Beta-lactamase 2 (blaU) of Streptomyces cacaoi.